A 264-amino-acid polypeptide reads, in one-letter code: Tryptophan synthase alpha chain (264 aa).

Residues E49 and D60 each act as proton acceptor in the active site.

The protein belongs to the TrpA family. In terms of assembly, tetramer of two alpha and two beta chains.

The catalysed reaction is (1S,2R)-1-C-(indol-3-yl)glycerol 3-phosphate + L-serine = D-glyceraldehyde 3-phosphate + L-tryptophan + H2O. It participates in amino-acid biosynthesis; L-tryptophan biosynthesis; L-tryptophan from chorismate: step 5/5. Its function is as follows. The alpha subunit is responsible for the aldol cleavage of indoleglycerol phosphate to indole and glyceraldehyde 3-phosphate. The chain is Tryptophan synthase alpha chain from Geobacter sulfurreducens (strain ATCC 51573 / DSM 12127 / PCA).